We begin with the raw amino-acid sequence, 412 residues long: Putative competence-damage inducible protein (412 aa).

It belongs to the CinA family.

This Bacillus cereus (strain G9842) protein is Putative competence-damage inducible protein.